The chain runs to 88 residues: Small ribosomal subunit protein uS19 (88 aa).

It belongs to the universal ribosomal protein uS19 family.

Functionally, protein S19 forms a complex with S13 that binds strongly to the 16S ribosomal RNA. The chain is Small ribosomal subunit protein uS19 from Mycoplasma mycoides subsp. mycoides SC (strain CCUG 32753 / NCTC 10114 / PG1).